The following is a 473-amino-acid chain: Phosphatidylserine synthase 1 (473 aa).

The residue at position 2 (Ala2) is an N-acetylalanine. Over 2–35 (ASCVGSRTLSKDDVNYRMHFRMINEQQVEDITID) the chain is Cytoplasmic. A helical transmembrane segment spans residues 36–56 (FFYRPHTITLLSFTIISLMYF). Residues 57–72 (AFTRDDCVPEDNIWRG) lie on the Lumenal side of the membrane. Residues 73–93 (ILSVIFFFLIISVLAFPNGPF) form a helical membrane-spanning segment. Residues 94-102 (TRPHPALWR) are Cytoplasmic-facing. Residues 103 to 123 (MVFGLSVLYFLFLVFLLFLNF) traverse the membrane as a helical segment. Over 124–186 (EQVKSLMYWL…AMKALLIRSY (63 aa)) the chain is Lumenal. The helical transmembrane segment at 187 to 207 (GLCWTISITWELTELFFMHLL) threads the bilayer. The Cytoplasmic segment spans residues 208-216 (PNFAECWWD). Residues 217–237 (QVILDILLCNGGGIWLGMVVC) traverse the membrane as a helical segment. The Lumenal portion of the chain corresponds to 238–286 (RFLEMRTYHWASFKDIHTTTGKIKRAVLQFTPASWTYVRWFDPKSSFQR). Residues 287–307 (VAGIYLFMIIWQLTELNTFFL) form a helical membrane-spanning segment. At 308 to 319 (KHIFVFQASHPL) the chain is on the cytoplasmic side. Residues 320-342 (SWCRILFIGCITAPTVRQYYAYL) form a helical membrane-spanning segment. At 343–355 (TDTQCKRVGTQCW) the chain is on the lumenal side. Residues 356–376 (VFGVIGFLEAIVCIKFGQDLF) traverse the membrane as a helical segment. At 377 to 383 (SKTQILY) the chain is on the cytoplasmic side. A helical membrane pass occupies residues 384–404 (VVLWLLCVAFTTFLCLYGMVW). The Lumenal segment spans residues 405 to 473 (YAEHYGHREK…SKVTNGVGKK (69 aa)). Phosphoserine occurs at positions 417, 425, 442, and 454. The interval 430 to 473 (WYHGKGSKGSEDSPPKHSNNNESHSSRRRNRHSKSKVTNGVGKK) is disordered. Residues 455 to 464 (SRRRNRHSKS) show a composition bias toward basic residues.

It belongs to the phosphatidyl serine synthase family.

The protein resides in the endoplasmic reticulum membrane. The enzyme catalyses a 1,2-diacyl-sn-glycero-3-phosphoethanolamine + L-serine = a 1,2-diacyl-sn-glycero-3-phospho-L-serine + ethanolamine. The catalysed reaction is a 1,2-diacyl-sn-glycero-3-phosphocholine + L-serine = a 1,2-diacyl-sn-glycero-3-phospho-L-serine + choline. The protein operates within phospholipid metabolism; phosphatidylserine biosynthesis. Catalyzes a base-exchange reaction in which the polar head group of phosphatidylethanolamine (PE) or phosphatidylcholine (PC) is replaced by L-serine. Catalyzes mainly the conversion of phosphatidylcholine but also converts, in vitro and to a lesser extent, phosphatidylethanolamine. This is Phosphatidylserine synthase 1 (Ptdss1) from Rattus norvegicus (Rat).